The chain runs to 263 residues: Inner membrane protein YpjD (263 aa).

Residues 1 to 3 (MPV) lie on the Periplasmic side of the membrane. Residues 4–23 (FALLALVAYSVSLALIVPGL) traverse the membrane as a helical segment. The Cytoplasmic segment spans residues 24–34 (LQKNGGWRRMA). Residues 35–54 (IISAVIALVCHAIALEARIL) form a helical membrane-spanning segment. The Periplasmic segment spans residues 55 to 63 (PDGDSGQNL). Residues 64–83 (SLLNVGSLVSLMICTVMTIV) traverse the membrane as a helical segment. At 84 to 89 (ASRNRG) the chain is on the cytoplasmic side. A helical membrane pass occupies residues 90–109 (WLLLPIVYAFALINLALATF). The Periplasmic segment spans residues 110 to 123 (MPNEYITHLEATPG). The chain crosses the membrane as a helical span at residues 124–146 (MLVHIGLSLFSYATLIIAALYAL). Residues 147–181 (QLAWIDYQLKNKKLAFNQEMPPLMSIERKMFHITQ) are Cytoplasmic-facing. The helical transmembrane segment at 182-201 (IGVVLLTLTLCTGLFYMHNL) threads the bilayer. Residues 202–210 (FSMENIDKA) lie on the Periplasmic side of the membrane. A helical transmembrane segment spans residues 211-228 (VLSIVAWFVYIVLLWGHY). At 229–236 (HEGWRGRR) the chain is on the cytoplasmic side. The helical transmembrane segment at 237 to 259 (VVWFNVAGAVILTLAYFGSRIVQ) threads the bilayer. The Periplasmic segment spans residues 260–263 (QLIS).

Its subcellular location is the cell inner membrane. This chain is Inner membrane protein YpjD (ypjD), found in Escherichia coli O157:H7.